The sequence spans 206 residues: Thiamine-phosphate synthase (206 aa).

4-amino-2-methyl-5-(diphosphooxymethyl)pyrimidine is bound by residues 35 to 39 (QLRDK) and asparagine 67. Residues aspartate 68 and aspartate 87 each contribute to the Mg(2+) site. Serine 106 contacts 4-amino-2-methyl-5-(diphosphooxymethyl)pyrimidine. 132 to 134 (TGT) is a binding site for 2-[(2R,5Z)-2-carboxy-4-methylthiazol-5(2H)-ylidene]ethyl phosphate. A 4-amino-2-methyl-5-(diphosphooxymethyl)pyrimidine-binding site is contributed by lysine 135. 2-[(2R,5Z)-2-carboxy-4-methylthiazol-5(2H)-ylidene]ethyl phosphate-binding positions include glycine 163 and 183 to 184 (IS).

Belongs to the thiamine-phosphate synthase family. The cofactor is Mg(2+).

It carries out the reaction 2-[(2R,5Z)-2-carboxy-4-methylthiazol-5(2H)-ylidene]ethyl phosphate + 4-amino-2-methyl-5-(diphosphooxymethyl)pyrimidine + 2 H(+) = thiamine phosphate + CO2 + diphosphate. It catalyses the reaction 2-(2-carboxy-4-methylthiazol-5-yl)ethyl phosphate + 4-amino-2-methyl-5-(diphosphooxymethyl)pyrimidine + 2 H(+) = thiamine phosphate + CO2 + diphosphate. The catalysed reaction is 4-methyl-5-(2-phosphooxyethyl)-thiazole + 4-amino-2-methyl-5-(diphosphooxymethyl)pyrimidine + H(+) = thiamine phosphate + diphosphate. It participates in cofactor biosynthesis; thiamine diphosphate biosynthesis; thiamine phosphate from 4-amino-2-methyl-5-diphosphomethylpyrimidine and 4-methyl-5-(2-phosphoethyl)-thiazole: step 1/1. Condenses 4-methyl-5-(beta-hydroxyethyl)thiazole monophosphate (THZ-P) and 2-methyl-4-amino-5-hydroxymethyl pyrimidine pyrophosphate (HMP-PP) to form thiamine monophosphate (TMP). In Methanospirillum hungatei JF-1 (strain ATCC 27890 / DSM 864 / NBRC 100397 / JF-1), this protein is Thiamine-phosphate synthase.